The sequence spans 574 residues: DNA mismatch repair protein MutL (574 aa).

The protein belongs to the DNA mismatch repair MutL/HexB family.

In terms of biological role, this protein is involved in the repair of mismatches in DNA. It is required for dam-dependent methyl-directed DNA mismatch repair. May act as a 'molecular matchmaker', a protein that promotes the formation of a stable complex between two or more DNA-binding proteins in an ATP-dependent manner without itself being part of a final effector complex. In Coxiella burnetii (strain RSA 331 / Henzerling II), this protein is DNA mismatch repair protein MutL.